The chain runs to 195 residues: 3-isopropylmalate dehydratase small subunit (195 aa).

Belongs to the LeuD family. LeuD type 1 subfamily. In terms of assembly, heterodimer of LeuC and LeuD.

The enzyme catalyses (2R,3S)-3-isopropylmalate = (2S)-2-isopropylmalate. It participates in amino-acid biosynthesis; L-leucine biosynthesis; L-leucine from 3-methyl-2-oxobutanoate: step 2/4. Functionally, catalyzes the isomerization between 2-isopropylmalate and 3-isopropylmalate, via the formation of 2-isopropylmaleate. This Koribacter versatilis (strain Ellin345) protein is 3-isopropylmalate dehydratase small subunit.